Reading from the N-terminus, the 380-residue chain is Chaperone protein DnaJ (380 aa).

In terms of domain architecture, J spans 5 to 69 (DYYEILGVSK…QKRAHYDQFG (65 aa)). Residues 135-217 (GKETDIEIPS…CGGTGRVKRR (83 aa)) form a CR-type zinc finger. Positions 148, 151, 165, 168, 191, 194, 205, and 208 each coordinate Zn(2+). 4 CXXCXGXG motif repeats span residues 148–155 (CNTCHGTG), 165–172 (CPHCHGAG), 191–198 (CPYCGGTG), and 205–212 (CTTCGGTG).

The protein belongs to the DnaJ family. Homodimer. Zn(2+) serves as cofactor.

The protein resides in the cytoplasm. In terms of biological role, participates actively in the response to hyperosmotic and heat shock by preventing the aggregation of stress-denatured proteins and by disaggregating proteins, also in an autonomous, DnaK-independent fashion. Unfolded proteins bind initially to DnaJ; upon interaction with the DnaJ-bound protein, DnaK hydrolyzes its bound ATP, resulting in the formation of a stable complex. GrpE releases ADP from DnaK; ATP binding to DnaK triggers the release of the substrate protein, thus completing the reaction cycle. Several rounds of ATP-dependent interactions between DnaJ, DnaK and GrpE are required for fully efficient folding. Also involved, together with DnaK and GrpE, in the DNA replication of plasmids through activation of initiation proteins. The polypeptide is Chaperone protein DnaJ (Geobacillus stearothermophilus (Bacillus stearothermophilus)).